The primary structure comprises 127 residues: Fluoride-specific ion channel FluC (127 aa).

Transmembrane regions (helical) follow at residues 37–57 (TSFV…WLAL), 68–88 (LFLA…SLEV), and 102–122 (LYAG…LWMA). Gly76 and Thr79 together coordinate Na(+).

Belongs to the fluoride channel Fluc/FEX (TC 1.A.43) family.

It is found in the cell inner membrane. The enzyme catalyses fluoride(in) = fluoride(out). Its activity is regulated as follows. Na(+) is not transported, but it plays an essential structural role and its presence is essential for fluoride channel function. Fluoride-specific ion channel. Important for reducing fluoride concentration in the cell, thus reducing its toxicity. This Hyphomonas neptunium (strain ATCC 15444) protein is Fluoride-specific ion channel FluC.